A 314-amino-acid polypeptide reads, in one-letter code: Ribosomal protein uL3 glutamine methyltransferase (314 aa).

This sequence belongs to the protein N5-glutamine methyltransferase family. PrmB subfamily.

It catalyses the reaction L-glutaminyl-[ribosomal protein uL3] + S-adenosyl-L-methionine = N(5)-methyl-L-glutaminyl-[ribosomal protein uL3] + S-adenosyl-L-homocysteine + H(+). Its function is as follows. Methylates large ribosomal subunit protein uL3 on a specific glutamine residue. The sequence is that of Ribosomal protein uL3 glutamine methyltransferase from Francisella tularensis subsp. tularensis (strain SCHU S4 / Schu 4).